A 556-amino-acid polypeptide reads, in one-letter code: 2-succinyl-5-enolpyruvyl-6-hydroxy-3-cyclohexene-1-carboxylate synthase (556 aa).

This sequence belongs to the TPP enzyme family. MenD subfamily. Homodimer. It depends on Mg(2+) as a cofactor. The cofactor is Mn(2+). Requires thiamine diphosphate as cofactor.

It catalyses the reaction isochorismate + 2-oxoglutarate + H(+) = 5-enolpyruvoyl-6-hydroxy-2-succinyl-cyclohex-3-ene-1-carboxylate + CO2. It functions in the pathway quinol/quinone metabolism; 1,4-dihydroxy-2-naphthoate biosynthesis; 1,4-dihydroxy-2-naphthoate from chorismate: step 2/7. The protein operates within quinol/quinone metabolism; menaquinone biosynthesis. Catalyzes the thiamine diphosphate-dependent decarboxylation of 2-oxoglutarate and the subsequent addition of the resulting succinic semialdehyde-thiamine pyrophosphate anion to isochorismate to yield 2-succinyl-5-enolpyruvyl-6-hydroxy-3-cyclohexene-1-carboxylate (SEPHCHC). This Salmonella gallinarum (strain 287/91 / NCTC 13346) protein is 2-succinyl-5-enolpyruvyl-6-hydroxy-3-cyclohexene-1-carboxylate synthase.